The following is a 309-amino-acid chain: D-alanine--D-alanine ligase (309 aa).

The ATP-grasp domain occupies 99 to 304 (KRVLLQAGIP…FPDLVQKIVD (206 aa)). 132 to 187 (LKELGLPVVIKAPTQGSTIGTFIVREEGELEPAIAGALKYDLSFMAEAYLAGPEIT) provides a ligand contact to ATP. Positions 258, 271, and 273 each coordinate Mg(2+).

This sequence belongs to the D-alanine--D-alanine ligase family. Requires Mg(2+) as cofactor. The cofactor is Mn(2+).

The protein resides in the cytoplasm. It carries out the reaction 2 D-alanine + ATP = D-alanyl-D-alanine + ADP + phosphate + H(+). The protein operates within cell wall biogenesis; peptidoglycan biosynthesis. In terms of biological role, cell wall formation. The sequence is that of D-alanine--D-alanine ligase from Moorella thermoacetica (strain ATCC 39073 / JCM 9320).